Reading from the N-terminus, the 218-residue chain is Large ribosomal subunit protein bL25 (218 aa).

The tract at residues 178 to 218 (VTPPTVTEDPDATEEDNTTAESVEATGERNDDNLDRPGRVE) is disordered. Over residues 185-195 (EDPDATEEDNT) the composition is skewed to acidic residues. A compositionally biased stretch (basic and acidic residues) spans 203 to 218 (TGERNDDNLDRPGRVE).

This sequence belongs to the bacterial ribosomal protein bL25 family. CTC subfamily. As to quaternary structure, part of the 50S ribosomal subunit; part of the 5S rRNA/L5/L18/L25 subcomplex. Contacts the 5S rRNA. Binds to the 5S rRNA independently of L5 and L18.

This is one of the proteins that binds to the 5S RNA in the ribosome where it forms part of the central protuberance. The protein is Large ribosomal subunit protein bL25 of Shouchella clausii (strain KSM-K16) (Alkalihalobacillus clausii).